A 413-amino-acid polypeptide reads, in one-letter code: ORC1-type DNA replication protein 10 (413 aa).

Residues 63-67, Tyr211, and Arg223 each bind ATP; that span reads VGKTA.

This sequence belongs to the CDC6/cdc18 family.

In terms of biological role, involved in regulation of DNA replication. In Halobacterium salinarum (strain ATCC 700922 / JCM 11081 / NRC-1) (Halobacterium halobium), this protein is ORC1-type DNA replication protein 10 (orc10).